The primary structure comprises 727 residues: Polyphosphate kinase (727 aa).

An ATP-binding site is contributed by N82. Residues R412 and R442 each coordinate Mg(2+). The active-site Phosphohistidine intermediate is the H472. 3 residues coordinate ATP: Y505, R601, and H629.

This sequence belongs to the polyphosphate kinase 1 (PPK1) family. It depends on Mg(2+) as a cofactor. Post-translationally, an intermediate of this reaction is the autophosphorylated ppk in which a phosphate is covalently linked to a histidine residue through a N-P bond.

It catalyses the reaction [phosphate](n) + ATP = [phosphate](n+1) + ADP. In terms of biological role, catalyzes the reversible transfer of the terminal phosphate of ATP to form a long-chain polyphosphate (polyP). This chain is Polyphosphate kinase, found in Pseudomonas putida (strain ATCC 47054 / DSM 6125 / CFBP 8728 / NCIMB 11950 / KT2440).